Reading from the N-terminus, the 229-residue chain is Extracellular endonuclease (229 aa).

The first 19 residues, 1–19 (MSARFIAVFCLFFTVTAHA), serve as a signal peptide directing secretion. The segment at 69–95 (RADASNGNTSSRPGRSGISASAGKPVG) is disordered. Polar residues predominate over residues 71 to 81 (DASNGNTSSRP).

This sequence belongs to the EndA/NucM nuclease family.

The protein resides in the secreted. The sequence is that of Extracellular endonuclease (endX) from Pseudomonas fluorescens biotype A.